The chain runs to 301 residues: 3-dehydroquinate dehydratase (301 aa).

Positions 1–221 (MLQYGVLICG…YYAALLALGI (221 aa)) are 3-dehydroquinate dehydratase. 3-dehydroquinate-binding positions include 32-34 (ELR) and Arg-63. His-119 (proton donor/acceptor) is an active-site residue. Catalysis depends on Lys-145, which acts as the Schiff-base intermediate with substrate. 3-dehydroquinate-binding residues include Arg-183, Thr-202, and Gln-206. Positions 222-301 (TPSGGGLPAL…QMCKAVQLVA (80 aa)) constitute a Chorismate mutase domain.

This sequence belongs to the type-I 3-dehydroquinase family. Homodimer.

It catalyses the reaction 3-dehydroquinate = 3-dehydroshikimate + H2O. Its pathway is metabolic intermediate biosynthesis; chorismate biosynthesis; chorismate from D-erythrose 4-phosphate and phosphoenolpyruvate: step 3/7. Involved in the third step of the chorismate pathway, which leads to the biosynthesis of aromatic amino acids. Catalyzes the cis-dehydration of 3-dehydroquinate (DHQ) and introduces the first double bond of the aromatic ring to yield 3-dehydroshikimate. This is 3-dehydroquinate dehydratase from Pyrobaculum aerophilum (strain ATCC 51768 / DSM 7523 / JCM 9630 / CIP 104966 / NBRC 100827 / IM2).